A 363-amino-acid chain; its full sequence is MERLSGEKEQSVEAFGWAARDSSGHLSPFVFSRRKTGEEEVRVKVLYCGICHSDLHCLKNEWHSSIYPLVPGHEIIGEVSEIGNKVSKFNLGDKVGVGCIVDSCRTCESCREDQENYCTKAIATYNGVHHDGTINYGGYSDHIVVDERYAVKIPHTLPLVSAAPLLCAGISMYSPMKYFGLTGPDKHVGIVGLGGLGHIGVRFAKAFGTKVTVVSSTTGKSKDALDTLGADGFLVSTDEDQMKAAMGTMDGIIDTVSASHSISPLIGLLKSNGKLVLLGATEKPFDISAFSLILGRKSIAGSGIGGMQETQEMIDFAAEHGIKAEIEIISMDYVNTAMDRLAKGDVRYRFVIDISNTLAATRS.

Cys51 provides a ligand contact to Zn(2+). Ser53 is a binding site for NADP(+). Zn(2+)-binding residues include His73, Glu74, Cys104, Cys107, Cys110, Cys118, and Cys167. NADP(+) contacts are provided by residues Ser171, 192 to 197 (GLGGLG), 215 to 220 (SSTTGK), Thr255, Gly279, and 302 to 304 (SGI).

This sequence belongs to the zinc-containing alcohol dehydrogenase family. Homodimer. Zn(2+) is required as a cofactor. As to expression, expressed in the primary and lateral roots, and root caps. Expressed in the hypocotyl, cotyledon veins and hydathodes. In stems, expressed in the vascular cambium, interfascicular cambium and developing xylem. Expressed in the style, anthers, stamen filaments, vascular tissues of sepals, stigmatic regions in flowers, and abscission and style regions of siliques.

It carries out the reaction (E)-cinnamyl alcohol + NADP(+) = (E)-cinnamaldehyde + NADPH + H(+). The enzyme catalyses (E)-coniferol + NADP(+) = (E)-coniferaldehyde + NADPH + H(+). It catalyses the reaction (E)-sinapyl alcohol + NADP(+) = (E)-sinapaldehyde + NADPH + H(+). The catalysed reaction is (E)-4-coumaroyl alcohol + NADP(+) = (E)-4-coumaraldehyde + NADPH + H(+). It carries out the reaction (E)-caffeyl alcohol + NADP(+) = (E)-caffeyl aldehyde + NADPH + H(+). It functions in the pathway aromatic compound metabolism; phenylpropanoid biosynthesis. Its function is as follows. Involved in lignin biosynthesis. Catalyzes the final step specific for the production of lignin monomers. Catalyzes the NADPH-dependent reduction of coniferaldehyde, 5-hydroxyconiferaldehyde, sinapaldehyde, 4-coumaraldehyde and caffeyl aldehyde to their respective alcohols. In Arabidopsis thaliana (Mouse-ear cress), this protein is Probable cinnamyl alcohol dehydrogenase 6 (CAD6).